The following is a 397-amino-acid chain: uncharacterized protein (397 aa).

12 consecutive transmembrane segments (helical) span residues 5–25 (LKIL…LWPL), 43–63 (LVLM…GFLF), 69–89 (FKSI…LVFF), 92–112 (WPAY…VFPA), 131–151 (AIYV…GVVA), 157–177 (YVFL…YFGF), 202–222 (FAAL…YSQW), 233–253 (IGIS…LIVL), 269–289 (LKAQ…MLLT), 293–313 (FPMF…VWPA), 333–353 (FVNS…GVLV), and 360–380 (ALVL…LLYD).

It belongs to the major facilitator superfamily.

It is found in the cell membrane. This is an uncharacterized protein from Bacillus subtilis (strain 168).